A 151-amino-acid polypeptide reads, in one-letter code: Putative pre-16S rRNA nuclease (151 aa).

The protein belongs to the YqgF nuclease family.

The protein localises to the cytoplasm. Could be a nuclease involved in processing of the 5'-end of pre-16S rRNA. This Chlamydia pneumoniae (Chlamydophila pneumoniae) protein is Putative pre-16S rRNA nuclease.